A 276-amino-acid chain; its full sequence is Methylesterase 17 (276 aa).

The AB hydrolase-1 domain maps to 19 to 138 (PHFVLIHGMS…TDEDMKDGVP (120 aa)). Ser-95 functions as the Acyl-ester intermediate in the catalytic mechanism. Active-site charge relay system residues include Asp-225 and His-252.

The protein belongs to the AB hydrolase superfamily. Methylesterase family. As to expression, expressed in several tissues of seedlings and adult plants, with a higher relative level of expression in the seedling shoot apex and the adult stem.

The catalysed reaction is methyl (indol-3-yl)acetate + H2O = (indol-3-yl)acetate + methanol + H(+). It participates in plant hormone biosynthesis. Its function is as follows. Methylesterase that efficiently and specifically hydrolyzes methyl indole-3-acetic acid (MeIAA) to IAA (auxin). MeIAA is believed to be an inactive form of auxin that needs to be demethylated to exert a biological effect. The chain is Methylesterase 17 from Arabidopsis thaliana (Mouse-ear cress).